Reading from the N-terminus, the 102-residue chain is Small ribosomal subunit protein uS10 (102 aa).

It belongs to the universal ribosomal protein uS10 family. As to quaternary structure, part of the 30S ribosomal subunit.

Its function is as follows. Involved in the binding of tRNA to the ribosomes. This chain is Small ribosomal subunit protein uS10, found in Acidiphilium cryptum (strain JF-5).